A 299-amino-acid chain; its full sequence is tRNA pseudouridine synthase B (299 aa).

The active-site Nucleophile is D47.

This sequence belongs to the pseudouridine synthase TruB family. Type 1 subfamily.

The catalysed reaction is uridine(55) in tRNA = pseudouridine(55) in tRNA. In terms of biological role, responsible for synthesis of pseudouridine from uracil-55 in the psi GC loop of transfer RNAs. This chain is tRNA pseudouridine synthase B, found in Dechloromonas aromatica (strain RCB).